The sequence spans 347 residues: 4-hydroxy-2-oxovalerate aldolase 1 (347 aa).

Positions 13–265 constitute a Pyruvate carboxyltransferase domain; it reads IRVTDTSLRD…KTGIDFFAIA (253 aa). 21-22 contacts substrate; the sequence is RD. Residue Asp22 participates in Mn(2+) binding. The active-site Proton acceptor is the His25. The substrate site is built by Ser175 and His204. Mn(2+)-binding residues include His204 and His206. Tyr295 lines the substrate pocket.

The protein belongs to the 4-hydroxy-2-oxovalerate aldolase family.

It carries out the reaction (S)-4-hydroxy-2-oxopentanoate = acetaldehyde + pyruvate. In Rhodococcus erythropolis (strain PR4 / NBRC 100887), this protein is 4-hydroxy-2-oxovalerate aldolase 1.